Here is a 66-residue protein sequence, read N- to C-terminus: DNA gyrase inhibitor YacG (66 aa).

Residues cysteine 10, cysteine 13, cysteine 29, and cysteine 33 each coordinate Zn(2+). A disordered region spans residues 46–66; the sequence is KRIPSDVQITDSDEWSDETRY. Residues 56–66 are compositionally biased toward acidic residues; it reads DSDEWSDETRY.

Belongs to the DNA gyrase inhibitor YacG family. As to quaternary structure, interacts with GyrB. Requires Zn(2+) as cofactor.

Its function is as follows. Inhibits all the catalytic activities of DNA gyrase by preventing its interaction with DNA. Acts by binding directly to the C-terminal domain of GyrB, which probably disrupts DNA binding by the gyrase. The sequence is that of DNA gyrase inhibitor YacG from Sodalis glossinidius (strain morsitans).